A 207-amino-acid polypeptide reads, in one-letter code: Small ribosomal subunit protein uS4 (207 aa).

Positions 32–55 (CKLDSKPGQHGRTSGARTSDYGTQ) are disordered. Polar residues predominate over residues 42–53 (GRTSGARTSDYG). In terms of domain architecture, S4 RNA-binding spans 97-158 (SRLDNVVYRM…TKKKQARILE (62 aa)).

Belongs to the universal ribosomal protein uS4 family. In terms of assembly, part of the 30S ribosomal subunit. Contacts protein S5. The interaction surface between S4 and S5 is involved in control of translational fidelity.

In terms of biological role, one of the primary rRNA binding proteins, it binds directly to 16S rRNA where it nucleates assembly of the body of the 30S subunit. With S5 and S12 plays an important role in translational accuracy. The chain is Small ribosomal subunit protein uS4 from Paraburkholderia phytofirmans (strain DSM 17436 / LMG 22146 / PsJN) (Burkholderia phytofirmans).